A 486-amino-acid chain; its full sequence is uncharacterized protein (486 aa).

LRR repeat units lie at residues 18-39 (NLKK…KKLV), 43-59 (ELHI…NIPE), 60-81 (NIKS…TKLK), 82-103 (NITY…ILPH), 104-125 (SIEF…NNLV), 126-147 (NLKK…FPIS), 148-168 (IVEL…EKLI), 169-190 (NLKK…IKFP), and 198-219 (DYQS…IEYE).

This is an uncharacterized protein from Amsacta moorei entomopoxvirus (AmEPV).